The primary structure comprises 253 residues: HTH-type transcriptional regulator YdeO (253 aa).

Residues 137-233 (GKVRNIVNMK…GNSPKRVSKE (97 aa)) enclose the HTH araC/xylS-type domain. DNA-binding regions (H-T-H motif) lie at residues 154 to 175 (KDICDCLYISESLLKKKLKQEQ) and 200 to 223 (VNKIAEQCGYASTSYFIYAFRKHF).

Induces the expression of gadE and mdtEF. Could also regulate the expression of other genes involved in acid resistance. This is HTH-type transcriptional regulator YdeO (ydeO) from Escherichia coli O6:H1 (strain CFT073 / ATCC 700928 / UPEC).